Here is a 341-residue protein sequence, read N- to C-terminus: Phenylalanine--tRNA ligase alpha subunit (341 aa).

A Mg(2+)-binding site is contributed by E254.

This sequence belongs to the class-II aminoacyl-tRNA synthetase family. Phe-tRNA synthetase alpha subunit type 1 subfamily. Tetramer of two alpha and two beta subunits. Mg(2+) serves as cofactor.

The protein resides in the cytoplasm. It catalyses the reaction tRNA(Phe) + L-phenylalanine + ATP = L-phenylalanyl-tRNA(Phe) + AMP + diphosphate + H(+). The protein is Phenylalanine--tRNA ligase alpha subunit (pheS) of Mycoplasma pneumoniae (strain ATCC 29342 / M129 / Subtype 1) (Mycoplasmoides pneumoniae).